The primary structure comprises 248 residues: MPPVLILLTLLLPLGAGAEEIIGGHVVKPHSRPYMAFVKSVDIEGNRRYCGGFLVQDDFVLTAAHCRNRTMTVTLGAHNIKAKEETQQIIPVAKAIPHPDYNATAFFSDIMLLKLESKAKRTKAVRPLKLPRPNARVKPGDVCSVAGWGSRSINDTKASARLREAQLVIQEDEECKKRFRHYTETTEICAGDLKKIKTPFKGDSGGPLVCDNKAYGLLAYAKNRTISSGVFTKIVHFLPWISRNMKLL.

The signal sequence occupies residues 1–18 (MPPVLILLTLLLPLGAGA). The propeptide occupies 19–20 (EE). Residues 21 to 246 (IIGGHVVKPH…FLPWISRNMK (226 aa)) form the Peptidase S1 domain. C50 and C66 are oxidised to a cystine. H65 (charge relay system) is an active-site residue. 2 N-linked (GlcNAc...) asparagine glycosylation sites follow: N68 and N102. The Charge relay system role is filled by D109. 2 disulfide bridges follow: C143–C210 and C175–C189. N-linked (GlcNAc...) asparagine glycosylation is present at N154. The active-site Charge relay system is the S204. The N-linked (GlcNAc...) asparagine glycan is linked to N223.

This sequence belongs to the peptidase S1 family. Granzyme subfamily.

The protein resides in the cytolytic granule. This enzyme is probably necessary for target cell lysis in cell-mediated immune responses. The polypeptide is Granzyme E (Gzme) (Mus musculus (Mouse)).